Here is a 188-residue protein sequence, read N- to C-terminus: UPF0200 protein YG5714_1176 (188 aa).

ATP is bound at residue 15 to 22 (GMPGSGKS).

Belongs to the UPF0200 family.

This Saccharolobus islandicus (strain Y.G.57.14 / Yellowstone #1) (Sulfolobus islandicus) protein is UPF0200 protein YG5714_1176.